The following is a 651-amino-acid chain: Probable potassium transport system protein Kup (651 aa).

The next 12 helical transmembrane spans lie at 41 to 61 (LVLGALGVVYGDIGTSPIYAF), 82 to 102 (VVSLIFWALTLVVTVKYVLFV), 130 to 150 (LILGVGICGAALFFGDAVITP), 163 to 183 (IVAPNLTPFVVPATVVILVTL), 194 to 214 (VAIVFGPIMALWFVALGASGL), 235 to 255 (FLTVSPAVAFVTVGAVFLAMT), 276 to 296 (WLWIVFPCLLLNYFGQAAFIL), 309 to 329 (MIPSFALWPMVLLATAATVIA), 366 to 386 (IYIPRVNLLLGLAVVILVLGF), 395 to 415 (AYGIAVTGNMLVTTVLLYIVM), 426 to 446 (ALPIILGFLVIDMLFFSANII), and 450 to 470 (EGGWASIGIATVLVLIMWTWV).

It belongs to the HAK/KUP transporter (TC 2.A.72) family.

The protein resides in the cell inner membrane. It catalyses the reaction K(+)(in) + H(+)(in) = K(+)(out) + H(+)(out). Transport of potassium into the cell. Likely operates as a K(+):H(+) symporter. This chain is Probable potassium transport system protein Kup, found in Brucella melitensis biotype 1 (strain ATCC 23456 / CCUG 17765 / NCTC 10094 / 16M).